The following is a 216-amino-acid chain: MOB kinase activator 3C (216 aa).

Residues C82, C87, H164, and H169 each contribute to the Zn(2+) site.

The protein belongs to the MOB1/phocein family.

May regulate the activity of kinases. In Mus musculus (Mouse), this protein is MOB kinase activator 3C (Mob3c).